A 1097-amino-acid chain; its full sequence is Importin-5 (1097 aa).

Ala-2 is modified (N-acetylalanine). HEAT repeat units follow at residues Ala-5 to Gly-38, Thr-43 to Val-77, Met-95 to Asp-122, Pro-130 to Asn-157, Gln-167 to Ile-201, Leu-210 to Thr-246, His-254 to Thr-289, Thr-298 to Leu-350, Gly-352 to Gly-386, His-390 to Phe-430, Pro-432 to Asp-472, Lys-475 to Ala-523, Glu-525 to Val-568, Lys-570 to Leu-615, Lys-617 to Leu-692, Gly-695 to Arg-737, Tyr-741 to Met-780, Asn-787 to Tyr-853, Lys-856 to Cys-895, Ala-903 to Tyr-935, Phe-943 to Lys-983, Glu-990 to Glu-1021, Asn-1032 to Gln-1067, and Thr-1070 to Leu-1093. The 72-residue stretch at Gln-28–Met-99 folds into the Importin N-terminal domain. The tract at residues Asp-325–Arg-375 is ran-GTP binding. Residue Ser-827 is modified to Phosphoserine.

It belongs to the importin beta family. Importin beta-3 subfamily. As to quaternary structure, interacts with RPS7 and RPL5. Interacts with RPL23A (via BIB domain). Interacts with H2A, H2B, H3 and H4 histones. Interacts with CPEB3; this mediates CPEB3 nuclear import following neuronal stimulation which enhances the interaction in a RAN-regulated manner. Interacts with AIFM2; this interaction likely mediates the translocation of AIFM2 into the nucleus upon oxidative stress. Interacts with STX3 (isoform 3). Interacts with SRP19. In terms of assembly, (Microbial infection) Interacts with HIV-1 Rev.

The protein localises to the cytoplasm. It is found in the nucleus. It localises to the nucleolus. Functions in nuclear protein import as nuclear transport receptor. Serves as receptor for nuclear localization signals (NLS) in cargo substrates. Is thought to mediate docking of the importin/substrate complex to the nuclear pore complex (NPC) through binding to nucleoporin and the complex is subsequently translocated through the pore by an energy requiring, Ran-dependent mechanism. At the nucleoplasmic side of the NPC, Ran binds to the importin, the importin/substrate complex dissociates and importin is re-exported from the nucleus to the cytoplasm where GTP hydrolysis releases Ran. The directionality of nuclear import is thought to be conferred by an asymmetric distribution of the GTP- and GDP-bound forms of Ran between the cytoplasm and nucleus. Mediates the nuclear import of ribosomal proteins RPL23A, RPS7 and RPL5. In vitro, mediates nuclear import of H2A, H2B, H3 and H4 histones. Binds to CPEB3 and mediates its nuclear import following neuronal stimulation. In case of HIV-1 infection, binds and mediates the nuclear import of HIV-1 Rev. This Homo sapiens (Human) protein is Importin-5 (IPO5).